The following is a 219-amino-acid chain: Outer membrane virulence protein YopE (219 aa).

The tract at residues 1-37 (MKISSFISTSLPLPTSVSGSSSVGEMSGRSVSQQTSD) is disordered. A compositionally biased stretch (low complexity) spans 8–32 (STSLPLPTSVSGSSSVGEMSGRSVS). Residues 101–219 (SFSDSIKQLA…QQMQKLLSLM (119 aa)) form the Bacterial Rho-GAP domain.

Belongs to the YopE family.

It localises to the cell outer membrane. Its function is as follows. Essential virulence determinant; cytotoxic effector, involved in resistance to phagocytosis. In Yersinia pestis, this protein is Outer membrane virulence protein YopE (yopE).